A 413-amino-acid polypeptide reads, in one-letter code: Cell division protein FtsA (413 aa).

This sequence belongs to the FtsA/MreB family. In terms of assembly, self-interacts. Interacts with FtsZ.

It is found in the cell inner membrane. Cell division protein that is involved in the assembly of the Z ring. May serve as a membrane anchor for the Z ring. The polypeptide is Cell division protein FtsA (Borreliella burgdorferi (strain ATCC 35210 / DSM 4680 / CIP 102532 / B31) (Borrelia burgdorferi)).